Here is a 955-residue protein sequence, read N- to C-terminus: Thrombospondin-4 (955 aa).

The N-terminal stretch at 1–24 (MPRRKGLCLFLQMLLLHLYGVCQA) is a signal peptide. The region spanning 25-192 (QPNYQVFDLL…MDELKLVMGG (168 aa)) is the Laminin G-like domain. The region spanning 281 to 320 (PKPRCDATSCFRGVRCIDTEGGFQCGPCPEGYTGNGVICT) is the EGF-like 1 domain. 21 disulfide bridges follow: Cys285-Cys296, Cys290-Cys305, Cys308-Cys319, Cys325-Cys336, Cys330-Cys345, Cys348-Cys372, Cys378-Cys392, Cys386-Cys401, Cys404-Cys416, Cys422-Cys435, Cys429-Cys445, Cys447-Cys458, Cys474-Cys479, Cys484-Cys504, Cys520-Cys540, Cys543-Cys563, Cys579-Cys599, Cys602-Cys622, Cys640-Cys660, Cys680-Cys700, and Cys716-Cys937. An EGF-like 2; calcium-binding domain is found at 321 to 358 (DVDECRLNPCFLGVRCINTSPGFKCESCPPGYTGSTIQ). An EGF-like 3; calcium-binding domain is found at 374-415 (DTNECENGRNGGCTSNSLCINTMGSFRCGGCKPGYVGDQIKG). The region spanning 418–459 (PEKSCRHGQNPCHASAQCSEEKDGDVTCTCSVGWAGNGYLCG) is the EGF-like 4 domain. 8 TSP type-3 repeats span residues 460–492 (KDTDIDGYPDEALPCPDKNCKKDNCVYVPNSGQ), 493–528 (EDTDKDNIGDACDEDADGDGILNEQDNCVLAANIDQ), 529–551 (KNSDQDIFGDACDNCRLTLNNDQ), 552–587 (RDTDNDGKGDACDDDMDGDGIKNILDNCQRVPNVDQ), 588–610 (KDKDGDGVGDICDSCPDIINPNQ), 611–648 (SDIDNDLVGDSCDTNQDSDGDGHQDSTDNCPTVINSNQ), 649–688 (LDTDKDGIGDECDDDDDNDGIPDTVPPGPDNCKLVPNPGQ), and 689–724 (EDDNNDGVGDVCEADFDQDTVIDRIDVCPENAEITL). Residue Asn609 is glycosylated (N-linked (GlcNAc...) asparagine). Positions 610–678 (QSDIDNDLVG…IPDTVPPGPD (69 aa)) are disordered. Over residues 637 to 649 (TDNCPTVINSNQL) the composition is skewed to polar residues. Residues 657–668 (GDECDDDDDNDG) are compositionally biased toward acidic residues. One can recognise a TSP C-terminal domain in the interval 728 to 942 (RAYQTVVLDP…LKYRCNDTIP (215 aa)). N-linked (GlcNAc...) asparagine glycosylation is present at Asn938.

The protein belongs to the thrombospondin family. In terms of assembly, homotrimer; disulfide-linked.

Its subcellular location is the endoplasmic reticulum. It is found in the sarcoplasmic reticulum. It localises to the secreted. The protein localises to the extracellular space. The protein resides in the extracellular matrix. Functionally, adhesive glycoprotein that mediates cell-to-cell and cell-to-matrix interactions and may be involved in various processes including cellular proliferation, migration, adhesion and attachment. May play a role in ER stress response. May participate in the genesis and function of cardiac and skeletal muscle. The sequence is that of Thrombospondin-4 (thbs4) from Xenopus laevis (African clawed frog).